The sequence spans 350 residues: Probable flap endonuclease 1 homolog (350 aa).

An N-domain region spans residues 1–95 (MGITKLAHLI…AVLEKRAQST (95 aa)). Aspartate 34 contacts Mg(2+). Residue arginine 61 participates in DNA binding. Residues aspartate 77, glutamate 130, glutamate 132, aspartate 151, and aspartate 153 each contribute to the Mg(2+) site. The tract at residues 110–223 (NQECLRLLHL…SRALKLIKEH (114 aa)) is I-domain. Glutamate 130 is a binding site for DNA. DNA-binding residues include glycine 201 and aspartate 203. Aspartate 203 lines the Mg(2+) pocket. The interval 317–325 (RQSRLEDFF) is interaction with PCNA.

Belongs to the XPG/RAD2 endonuclease family. FEN1 subfamily. As to quaternary structure, interacts with PCNA. Three molecules of fen1 bind to one PCNA trimer with each molecule binding to one PCNA monomer. PCNA stimulates the nuclease activity without altering cleavage specificity. Mg(2+) serves as cofactor. Post-translationally, phosphorylated. Phosphorylation upon DNA damage induces relocalization to the nuclear plasma.

It is found in the nucleus. It localises to the nucleolus. The protein resides in the nucleoplasm. Its subcellular location is the mitochondrion. Structure-specific nuclease with 5'-flap endonuclease and 5'-3' exonuclease activities involved in DNA replication and repair. During DNA replication, cleaves the 5'-overhanging flap structure that is generated by displacement synthesis when DNA polymerase encounters the 5'-end of a downstream Okazaki fragment. It enters the flap from the 5'-end and then tracks to cleave the flap base, leaving a nick for ligation. Also involved in the long patch base excision repair (LP-BER) pathway, by cleaving within the apurinic/apyrimidinic (AP) site-terminated flap. Acts as a genome stabilization factor that prevents flaps from equilibrating into structures that lead to duplications and deletions. Also possesses 5'-3' exonuclease activity on nicked or gapped double-stranded DNA, and exhibits RNase H activity. Also involved in replication and repair of rDNA and in repairing mitochondrial DNA. This is Probable flap endonuclease 1 homolog from Danio rerio (Zebrafish).